Consider the following 377-residue polypeptide: Erythronate-4-phosphate dehydrogenase (377 aa).

Residues serine 59 and threonine 81 each contribute to the substrate site. Aspartate 162 serves as a coordination point for NAD(+). The active site involves arginine 237. Residue aspartate 260 coordinates NAD(+). Glutamate 265 is an active-site residue. Histidine 282 (proton donor) is an active-site residue. Residue glycine 285 coordinates NAD(+). Tyrosine 286 is a binding site for substrate.

Belongs to the D-isomer specific 2-hydroxyacid dehydrogenase family. PdxB subfamily. Homodimer.

Its subcellular location is the cytoplasm. It catalyses the reaction 4-phospho-D-erythronate + NAD(+) = (R)-3-hydroxy-2-oxo-4-phosphooxybutanoate + NADH + H(+). The protein operates within cofactor biosynthesis; pyridoxine 5'-phosphate biosynthesis; pyridoxine 5'-phosphate from D-erythrose 4-phosphate: step 2/5. Catalyzes the oxidation of erythronate-4-phosphate to 3-hydroxy-2-oxo-4-phosphonooxybutanoate. The polypeptide is Erythronate-4-phosphate dehydrogenase (Psychrobacter arcticus (strain DSM 17307 / VKM B-2377 / 273-4)).